The primary structure comprises 275 residues: MARELRNAKISFVSYVDKAANQTEFFFTKSAEPPSFEKKVRLFTKSEQDEQKLVYGIVYEPDVPDAHGDFMTAEEIEKAAHGFLAEAREIDINHSFEGGTGVVVESYVAPDDFMIGSKRITKGSWVLVTRASDEVWEQIKAGIITGYSMAGTADVYEEEPVEKAGFFSVFKQMLADKTGKETEEMRKEDMKESFEHALYPLLKRLERIEKNTDTEEKPEQTGDDERLKKLVEDMLAPLIERIEALEKARGASKQTADDTGGNTEQVKKSIWSGLL.

Residues 247–275 form a disordered region; it reads KARGASKQTADDTGGNTEQVKKSIWSGLL.

This sequence to B.subtilis YqbD.

The sequence is that of Phage-like element PBSX protein XkdF (xkdF) from Bacillus subtilis (strain 168).